A 392-amino-acid chain; its full sequence is Rhizopuspepsin-5 (392 aa).

A signal peptide spans Met-1 to Ala-21. The propeptide at Ala-22–Asp-69 is activation peptide. Residues Tyr-85–Ala-389 form the Peptidase A1 domain. The active site involves Asp-103. A disulfide bond links Cys-116 and Cys-119. Asp-286 is a catalytic residue. Cys-320 and Cys-353 are oxidised to a cystine.

This sequence belongs to the peptidase A1 family.

It carries out the reaction Hydrolysis of proteins with broad specificity similar to that of pepsin A, preferring hydrophobic residues at P1 and P1'. Clots milk and activates trypsinogen. Does not cleave 4-Gln-|-His-5, but does cleave 10-His-|-Leu-11 and 12-Val-|-Glu-13 in B chain of insulin.. This chain is Rhizopuspepsin-5, found in Rhizopus niveus.